We begin with the raw amino-acid sequence, 487 residues long: Glutamate--tRNA ligase (487 aa).

A 'HIGH' region motif is present at residues 11–21 (PSPTGYPHLGN). Zn(2+) is bound by residues Cys108, Cys110, Cys135, and Asp137. The 'KMSKS' region signature appears at 245-249 (KLSKR). Lys248 is an ATP binding site.

It belongs to the class-I aminoacyl-tRNA synthetase family. Glutamate--tRNA ligase type 1 subfamily. Monomer. Requires Zn(2+) as cofactor.

Its subcellular location is the cytoplasm. It carries out the reaction tRNA(Glu) + L-glutamate + ATP = L-glutamyl-tRNA(Glu) + AMP + diphosphate. In terms of biological role, catalyzes the attachment of glutamate to tRNA(Glu) in a two-step reaction: glutamate is first activated by ATP to form Glu-AMP and then transferred to the acceptor end of tRNA(Glu). This is Glutamate--tRNA ligase from Dehalococcoides mccartyi (strain CBDB1).